Reading from the N-terminus, the 235-residue chain is Uridylate kinase (235 aa).

ATP is bound at residue 9-12 (KLSG). Gly-51 is a UMP binding site. 2 residues coordinate ATP: Gly-52 and Arg-56. UMP is bound by residues Asp-71 and 132-139 (TGNPYFTT). Residues Thr-159, Tyr-165, and Asp-168 each contribute to the ATP site.

It belongs to the UMP kinase family. In terms of assembly, homohexamer.

It is found in the cytoplasm. It carries out the reaction UMP + ATP = UDP + ADP. Its pathway is pyrimidine metabolism; CTP biosynthesis via de novo pathway; UDP from UMP (UMPK route): step 1/1. Its activity is regulated as follows. Inhibited by UTP. Catalyzes the reversible phosphorylation of UMP to UDP. The sequence is that of Uridylate kinase from Flavobacterium psychrophilum (strain ATCC 49511 / DSM 21280 / CIP 103535 / JIP02/86).